The sequence spans 159 residues: uncharacterized protein (159 aa).

The N-acetyltransferase domain occupies 7–151 (LLINYKTLEE…NPLIWEPAHI (145 aa)).

This is an uncharacterized protein from Bacillus pumilus (strain SAFR-032).